Here is a 238-residue protein sequence, read N- to C-terminus: MEVENINVDAFVPAKKAQKRSAVNNQDTEMQVDQATGIEGLVAGSTQASAPPRAKRIKSELRKVSVPPHRYSSLKEHWMKIFTPVVEHMKLQIRFNMKARQVELRVGPETPDIANLQKGADFVKAFLCGFEVDDALALLRLEDLFVETFEIKDVKTLRGDHQSRAIGRLAGKGGRTKFTIENVTKTRIVLADSKIHILGSYQNIQLARRAICNLILGSPPSKVYGNLRSVASRLSERM.

Residues 162 to 211 (QSRAIGRLAGKGGRTKFTIENVTKTRIVLADSKIHILGSYQNIQLARRAI) form the KH domain.

This sequence belongs to the PNO1 family.

The protein resides in the nucleus. It localises to the nucleolus. In Drosophila pseudoobscura pseudoobscura (Fruit fly), this protein is RNA-binding protein pno1 (l(1)G0004).